The following is a 172-amino-acid chain: 3-hydroxydecanoyl-[acyl-carrier-protein] dehydratase (172 aa).

His71 is an active-site residue.

This sequence belongs to the thioester dehydratase family. FabA subfamily. In terms of assembly, homodimer.

It is found in the cytoplasm. It carries out the reaction a (3R)-hydroxyacyl-[ACP] = a (2E)-enoyl-[ACP] + H2O. It catalyses the reaction (3R)-hydroxydecanoyl-[ACP] = (2E)-decenoyl-[ACP] + H2O. The catalysed reaction is (2E)-decenoyl-[ACP] = (3Z)-decenoyl-[ACP]. It functions in the pathway lipid metabolism; fatty acid biosynthesis. Functionally, necessary for the introduction of cis unsaturation into fatty acids. Catalyzes the dehydration of (3R)-3-hydroxydecanoyl-ACP to E-(2)-decenoyl-ACP and then its isomerization to Z-(3)-decenoyl-ACP. Can catalyze the dehydratase reaction for beta-hydroxyacyl-ACPs with saturated chain lengths up to 16:0, being most active on intermediate chain length. The protein is 3-hydroxydecanoyl-[acyl-carrier-protein] dehydratase of Escherichia coli O6:K15:H31 (strain 536 / UPEC).